Consider the following 333-residue polypeptide: MKGEAGHMLHNEKSKQEGHIWGSMRRTAFILGSGLLSFVAFWNSVTWHLQRFWGASGYFWQAQWERLLTTFEGKEWILFFIGAIQVPCLFFWSFNGLLLVVDTTGKPNFISRYRIQVGKNEPVDPVKLRQSIRTVLFNQCMISFPMVVFLYPFLKWWRDPCRRELPTFHWFLLELAIFTLIEEVLFYYSHRLLHHPTFYKKIHKKHHEWTAPIGVISLYAHPIEHAVSNMLPVIVGPLVMGSHLSSITMWFSLALIITTISHCGYHLPFLPSPEFHDYHHLKFNQCYGVLGVLDHLHGTDTMFKQTKAYERHVLLLGFTPLSESIPDSPKRME.

Helical transmembrane passes span 29-49 (FILGSGLLSFVAFWNSVTWHL), 77-97 (ILFFIGAIQVPCLFFWSFNGL), 134-154 (TVLFNQCMISFPMVVFLYPFL), 168-188 (FHWFLLELAIFTLIEEVLFYY), 215-235 (VISLYAHPIEHAVSNMLPVIV), and 237-257 (PLVMGSHLSSITMWFSLALII). Residues 176-299 (AIFTLIEEVL…LGVLDHLHGT (124 aa)) enclose the Fatty acid hydroxylase domain.

The protein belongs to the sterol desaturase family. Down-regulated in primary acute myeloid leukemia (AML) patients.

The protein resides in the cytoplasm. The protein localises to the membrane. Functionally, promotes megakaryocyte differentiation by enhancing ERK phosphorylation and up-regulating RUNX1 expression. The chain is Fatty acid hydroxylase domain-containing protein 2 (FAXDC2) from Homo sapiens (Human).